Reading from the N-terminus, the 292-residue chain is MLGTVLLLALLPGITTLPSGPPAPPFPAAPGPWLRRPLFSLKLSDTEDVFPRRAGPLEVPADSRVFVQAALARPSPRWGLALHRCSVTPSSRPAPGPALALLREGCPADTSVAFPPPPPPSPGAARPARFSFRLRPVFNASVQFLHCQLSRCRRLRGVRRAPAPLTPPPPPPPSRCLPQDEACADTGSGSAEGLAADGPHLHTLTQPIVVTVPRPPPRPPKSVPGRAVRPEPPAPAPAALEPAPVVALVLAAFVLGAALAAGLGLVCAHSAPHAPGPPARASPSGPQPRRSQ.

Residues 1–16 (MLGTVLLLALLPGITT) form the signal peptide. The 154-residue stretch at 17-170 (LPSGPPAPPF…APAPLTPPPP (154 aa)) folds into the ZP; truncated domain. Over 17-244 (LPSGPPAPPF…PAPAALEPAP (228 aa)) the chain is Extracellular. Cysteines 85 and 147 form a disulfide. Residues 160-236 (RAPAPLTPPP…AVRPEPPAPA (77 aa)) form a disordered region. 2 stretches are compositionally biased toward pro residues: residues 164-175 (PLTPPPPPPPSR) and 213-222 (PRPPPRPPKS). A helical transmembrane segment spans residues 245–265 (VVALVLAAFVLGAALAAGLGL). Topologically, residues 266-292 (VCAHSAPHAPGPPARASPSGPQPRRSQ) are cytoplasmic. The tract at residues 273 to 292 (HAPGPPARASPSGPQPRRSQ) is disordered. Residues 281–292 (ASPSGPQPRRSQ) are compositionally biased toward low complexity.

In terms of processing, glycosylated. As to expression, expressed in pituitary gland gonadotrope cells.

Its subcellular location is the cell membrane. In terms of biological role, expressed in gonadotrope cells, acts as an inhibin B coreceptor and regulates follicle-stimulating hormone (FSH) levels and female fertility. The chain is Transforming growth factor-beta receptor type 3-like protein from Homo sapiens (Human).